The primary structure comprises 790 residues: Probable quinate dehydrogenase (quinone) (790 aa).

Helical transmembrane passes span 22–42, 48–68, 77–94, and 106–126; these read GSWY…LIVL, ALVY…DAGL, LMLP…WPAL, and AYGV…GMFV. Residues 171–200 form a disordered region; sequence RSNGRPAAGSPGPTTPGEIANSDGNGAEDQ. Low complexity predominate over residues 174-187; it reads GRPAAGSPGPTTPG.

Belongs to the bacterial PQQ dehydrogenase family. Pyrroloquinoline quinone is required as a cofactor.

It localises to the cell membrane. It carries out the reaction L-quinate + a quinone = 3-dehydroquinate + a quinol. Its pathway is aromatic compound metabolism; 3,4-dihydroxybenzoate biosynthesis; 3-dehydroquinate from D-quinate (PQQ route): step 1/1. This is Probable quinate dehydrogenase (quinone) (qumA) from Xanthomonas campestris pv. juglandis (Xanthomonas arboricola pv. juglandis).